Consider the following 113-residue polypeptide: Large ribosomal subunit protein bL19 (113 aa).

Belongs to the bacterial ribosomal protein bL19 family.

This protein is located at the 30S-50S ribosomal subunit interface and may play a role in the structure and function of the aminoacyl-tRNA binding site. This chain is Large ribosomal subunit protein bL19, found in Corynebacterium glutamicum (strain R).